The primary structure comprises 275 residues: Protein CIMAP1C (275 aa).

2 STPGR repeats span residues 200–225 (PGPA…MAKR) and 236–261 (PGPG…MGIK).

Belongs to the CIMAP family.

The chain is Protein CIMAP1C (CIMAP1C) from Mus musculus (Mouse).